The primary structure comprises 638 residues: Terrein cluster-specific transcription factor terR (638 aa).

Residues 50–76 constitute a DNA-binding region (zn(2)-C6 fungal-type); the sequence is CDMCKSKKVRCDGGTPCSYCNLHDLRC.

The protein resides in the nucleus. Its function is as follows. Transcription factor that regulates specifically the terrein biosynthesis gene cluster. Recognizes CGG direct repeat consensus sequences in the terrein cluster forming the high affinity consensus motif TCGGHHWYHCGGH. The chain is Terrein cluster-specific transcription factor terR from Aspergillus terreus (strain NIH 2624 / FGSC A1156).